We begin with the raw amino-acid sequence, 483 residues long: Triacylglycerol lipase ptl3 (483 aa).

The PNPLA domain occupies Leu-141–Thr-340. Residues Gly-145–Gly-150 carry the GXGXXG motif. The GXSXG signature appears at Gly-172–Gly-176. Ser-174 serves as the catalytic Nucleophile. Asp-327 functions as the Proton acceptor in the catalytic mechanism.

The protein resides in the cytoplasm. The protein localises to the lipid droplet. The enzyme catalyses a triacylglycerol + H2O = a diacylglycerol + a fatty acid + H(+). In terms of biological role, lipid particle-localized triacylglycerol (TAG) lipase. The lipid droplet/particle is a lipid storage compartment which serves as a depot of energy and building blocks for membrane lipid biosynthesis. Involved in the mobilization of the non-polar storage lipids triacylglycerols (TAGs) from lipid particles by hydrolysis of TAGs, releasing and supplying specific fatty acids to the appropriate metabolic pathways. The protein is Triacylglycerol lipase ptl3 (ptl3) of Schizosaccharomyces pombe (strain 972 / ATCC 24843) (Fission yeast).